A 470-amino-acid chain; its full sequence is Cyclin-B1-3 (470 aa).

Belongs to the cyclin family. Cyclin AB subfamily.

The polypeptide is Cyclin-B1-3 (CYCB1-3) (Oryza sativa subsp. japonica (Rice)).